Here is a 211-residue protein sequence, read N- to C-terminus: MSTIIAIDGPAAAGKGTLARRLAAELGFDYLDTGLIYRAVGMKLARAGLDPADVALAERAARQLSPDDLAATDLRIDEAAQAASKVASIPGVRAALLDFQRRFAATPPGGKGAVLDGRDIGTVVCPEAQVKLFVTASVEKRAERRLKELQEKGLGAIYGTVLADMRERDERDTNRAVAPLVPAQDAAVLDTSDLDADQAFAAALGIIGSKR.

9–17 (GPAAAGKGT) lines the ATP pocket.

Belongs to the cytidylate kinase family. Type 1 subfamily.

The protein localises to the cytoplasm. It catalyses the reaction CMP + ATP = CDP + ADP. It carries out the reaction dCMP + ATP = dCDP + ADP. The polypeptide is Cytidylate kinase (Paramagnetospirillum magneticum (strain ATCC 700264 / AMB-1) (Magnetospirillum magneticum)).